We begin with the raw amino-acid sequence, 154 residues long: Minor structural pilin EpdC (154 aa).

A propeptide spanning residues 1–13 is cleaved from the precursor; the sequence is MIKMLQLPFNKKG. A QXSXEXXXL motif is present at residues 14-24; it reads QVSFDFIIAML.

The N-terminus is cleaved by the prepilin peptidase EppA, which recognizes the class III signal sequence.

Its subcellular location is the secreted. It localises to the cell surface. The protein resides in the fimbrium. Minor component of the type IV-like pili. Essential for pili formation. The polypeptide is Minor structural pilin EpdC (Methanococcus maripaludis (strain DSM 14266 / JCM 13030 / NBRC 101832 / S2 / LL)).